A 393-amino-acid polypeptide reads, in one-letter code: NAD(P)H-quinone oxidoreductase subunit H, chloroplastic (393 aa).

The protein belongs to the complex I 49 kDa subunit family. NDH is composed of at least 16 different subunits, 5 of which are encoded in the nucleus.

Its subcellular location is the plastid. The protein localises to the chloroplast thylakoid membrane. The enzyme catalyses a plastoquinone + NADH + (n+1) H(+)(in) = a plastoquinol + NAD(+) + n H(+)(out). The catalysed reaction is a plastoquinone + NADPH + (n+1) H(+)(in) = a plastoquinol + NADP(+) + n H(+)(out). In terms of biological role, NDH shuttles electrons from NAD(P)H:plastoquinone, via FMN and iron-sulfur (Fe-S) centers, to quinones in the photosynthetic chain and possibly in a chloroplast respiratory chain. The immediate electron acceptor for the enzyme in this species is believed to be plastoquinone. Couples the redox reaction to proton translocation, and thus conserves the redox energy in a proton gradient. This is NAD(P)H-quinone oxidoreductase subunit H, chloroplastic from Guizotia abyssinica (Niger).